The primary structure comprises 463 residues: 23S rRNA (uracil(1939)-C(5))-methyltransferase RlmD (463 aa).

Residues 8–76 (RSKSATVYTF…KRFEEGELIE (69 aa)) form the TRAM domain. Residues Cys-90, Cys-96, Cys-99, and Cys-178 each coordinate [4Fe-4S] cluster. The S-adenosyl-L-methionine site is built by Gln-288, Phe-317, Asn-322, Glu-341, Asp-368, and Asp-389. Cys-415 functions as the Nucleophile in the catalytic mechanism.

This sequence belongs to the class I-like SAM-binding methyltransferase superfamily. RNA M5U methyltransferase family. RlmD subfamily.

It carries out the reaction uridine(1939) in 23S rRNA + S-adenosyl-L-methionine = 5-methyluridine(1939) in 23S rRNA + S-adenosyl-L-homocysteine + H(+). Catalyzes the formation of 5-methyl-uridine at position 1939 (m5U1939) in 23S rRNA. This chain is 23S rRNA (uracil(1939)-C(5))-methyltransferase RlmD, found in Acinetobacter baylyi (strain ATCC 33305 / BD413 / ADP1).